A 994-amino-acid chain; its full sequence is UPF0182 protein Strop_3729 (994 aa).

7 consecutive transmembrane segments (helical) span residues 18–38 (IGVL…VQAW), 61–81 (LLLF…NLWL), 110–130 (IGLW…LSAQ), 174–194 (FTAV…FGGI), 209–229 (AHLS…YVLD), 260–280 (ILAY…NAWM), and 283–303 (LVWP…IGGI). Disordered stretches follow at residues 891–934 (GEQA…AEAA) and 970–994 (FEQA…SPGG). The segment covering 897 to 926 (PSPPPSDDETPPSPTPTPTPTTPSVTPPPL) has biased composition (pro residues).

It belongs to the UPF0182 family.

Its subcellular location is the cell membrane. In Salinispora tropica (strain ATCC BAA-916 / DSM 44818 / JCM 13857 / NBRC 105044 / CNB-440), this protein is UPF0182 protein Strop_3729.